Here is a 378-residue protein sequence, read N- to C-terminus: Chaperone protein DnaJ (378 aa).

Residues 5–70 form the J domain; sequence DYYEVLSVGR…DKKAAYDQFG (66 aa). Residues 133–211 form a CR-type zinc finger; it reads GLTKELRIPT…CHGEGRVEKS (79 aa). Residues C146, C149, C163, C166, C185, C188, C199, and C202 each coordinate Zn(2+). CXXCXGXG motif repeat units follow at residues 146–153, 163–170, 185–192, and 199–206; these read CDTCDGSG, CGTCHGQG, CPTCHGRG, and CNSCHGEG.

It belongs to the DnaJ family. As to quaternary structure, homodimer. The cofactor is Zn(2+).

It localises to the cytoplasm. In terms of biological role, participates actively in the response to hyperosmotic and heat shock by preventing the aggregation of stress-denatured proteins and by disaggregating proteins, also in an autonomous, DnaK-independent fashion. Unfolded proteins bind initially to DnaJ; upon interaction with the DnaJ-bound protein, DnaK hydrolyzes its bound ATP, resulting in the formation of a stable complex. GrpE releases ADP from DnaK; ATP binding to DnaK triggers the release of the substrate protein, thus completing the reaction cycle. Several rounds of ATP-dependent interactions between DnaJ, DnaK and GrpE are required for fully efficient folding. Also involved, together with DnaK and GrpE, in the DNA replication of plasmids through activation of initiation proteins. In Shewanella woodyi (strain ATCC 51908 / MS32), this protein is Chaperone protein DnaJ.